We begin with the raw amino-acid sequence, 258 residues long: Acyl-[acyl-carrier-protein]--UDP-N-acetylglucosamine O-acyltransferase (258 aa).

This sequence belongs to the transferase hexapeptide repeat family. LpxA subfamily. Homotrimer.

The protein resides in the cytoplasm. The catalysed reaction is a (3R)-hydroxyacyl-[ACP] + UDP-N-acetyl-alpha-D-glucosamine = a UDP-3-O-[(3R)-3-hydroxyacyl]-N-acetyl-alpha-D-glucosamine + holo-[ACP]. The protein operates within glycolipid biosynthesis; lipid IV(A) biosynthesis; lipid IV(A) from (3R)-3-hydroxytetradecanoyl-[acyl-carrier-protein] and UDP-N-acetyl-alpha-D-glucosamine: step 1/6. In terms of biological role, involved in the biosynthesis of lipid A, a phosphorylated glycolipid that anchors the lipopolysaccharide to the outer membrane of the cell. In Syntrophobacter fumaroxidans (strain DSM 10017 / MPOB), this protein is Acyl-[acyl-carrier-protein]--UDP-N-acetylglucosamine O-acyltransferase.